The sequence spans 310 residues: Ribose-phosphate pyrophosphokinase (310 aa).

Residues 34-36 and 93-94 each bind ATP; these read DQE and RQ. The Mg(2+) site is built by His-127 and Asp-167. Residue Lys-190 is part of the active site. Residues Arg-192, Asp-216, and 220–224 each bind D-ribose 5-phosphate; that span reads DSGGT.

This sequence belongs to the ribose-phosphate pyrophosphokinase family. Class I subfamily. In terms of assembly, homohexamer. Mg(2+) is required as a cofactor.

The protein resides in the cytoplasm. It catalyses the reaction D-ribose 5-phosphate + ATP = 5-phospho-alpha-D-ribose 1-diphosphate + AMP + H(+). It functions in the pathway metabolic intermediate biosynthesis; 5-phospho-alpha-D-ribose 1-diphosphate biosynthesis; 5-phospho-alpha-D-ribose 1-diphosphate from D-ribose 5-phosphate (route I): step 1/1. Functionally, involved in the biosynthesis of the central metabolite phospho-alpha-D-ribosyl-1-pyrophosphate (PRPP) via the transfer of pyrophosphoryl group from ATP to 1-hydroxyl of ribose-5-phosphate (Rib-5-P). This chain is Ribose-phosphate pyrophosphokinase, found in Brucella melitensis biotype 1 (strain ATCC 23456 / CCUG 17765 / NCTC 10094 / 16M).